A 36-amino-acid chain; its full sequence is Pancreatic polypeptide (36 aa).

Tyr-36 bears the Tyrosine amide mark.

The protein belongs to the NPY family.

The protein localises to the secreted. Its function is as follows. Hormone secreted by pancreatic cells that acts as a regulator of pancreatic and gastrointestinal functions probably by signaling through the G protein-coupled receptor NPY4R2. The chain is Pancreatic polypeptide (PPY) from Tapirus pinchaque (Mountain tapir).